The primary structure comprises 72 residues: Subtilisin-chymotrypsin inhibitor-2B (72 aa).

Belongs to the protease inhibitor I13 (potato type I serine protease inhibitor) family.

In terms of biological role, inhibits both subtilisin and chymotrypsin. This is Subtilisin-chymotrypsin inhibitor-2B from Hordeum vulgare (Barley).